The primary structure comprises 348 residues: Selenide, water dikinase (348 aa).

The active site involves cysteine 17. ATP is bound by residues lysine 20 and 48–50 (TSD). Aspartate 51 provides a ligand contact to Mg(2+). ATP-binding positions include aspartate 68, aspartate 91, and 139–141 (GHT). Aspartate 91 serves as a coordination point for Mg(2+). Mg(2+) is bound at residue aspartate 227.

Belongs to the selenophosphate synthase 1 family. Class I subfamily. In terms of assembly, homodimer. It depends on Mg(2+) as a cofactor.

It catalyses the reaction hydrogenselenide + ATP + H2O = selenophosphate + AMP + phosphate + 2 H(+). Functionally, synthesizes selenophosphate from selenide and ATP. The protein is Selenide, water dikinase of Dechloromonas aromatica (strain RCB).